Reading from the N-terminus, the 130-residue chain is RutC family protein HI_0719 (130 aa).

Residue Cys-109 is part of the active site.

The protein belongs to the RutC family. Homotrimer.

The protein is RutC family protein HI_0719 of Haemophilus influenzae (strain ATCC 51907 / DSM 11121 / KW20 / Rd).